The primary structure comprises 540 residues: uncharacterized protein (540 aa).

The first 20 residues, M1 to S20, serve as a signal peptide directing secretion.

It belongs to the TP096X family.

This is an uncharacterized protein from Treponema pallidum (strain Nichols).